The sequence spans 204 residues: uncharacterized protein (204 aa).

The active-site Acyl-thioester intermediate is the Cys-52. Catalysis depends on residues His-89 and Asp-104.

This sequence belongs to the arylamine N-acetyltransferase family.

This is an uncharacterized protein from Acanthamoeba polyphaga mimivirus (APMV).